A 120-amino-acid polypeptide reads, in one-letter code: NAD(P)H-quinone oxidoreductase subunit 3 (120 aa).

3 helical membrane-spanning segments follow: residues 7-27 (YEYVLGFLLACSLIPILALTA), 64-84 (MFALVFVVFDVETVFLYPWAV), and 89-109 (LGLLAFVEALIFIAILVVALV).

This sequence belongs to the complex I subunit 3 family. In terms of assembly, NDH-1 can be composed of about 15 different subunits; different subcomplexes with different compositions have been identified which probably have different functions.

The protein localises to the cellular thylakoid membrane. It carries out the reaction a plastoquinone + NADH + (n+1) H(+)(in) = a plastoquinol + NAD(+) + n H(+)(out). It catalyses the reaction a plastoquinone + NADPH + (n+1) H(+)(in) = a plastoquinol + NADP(+) + n H(+)(out). In terms of biological role, NDH-1 shuttles electrons from an unknown electron donor, via FMN and iron-sulfur (Fe-S) centers, to quinones in the respiratory and/or the photosynthetic chain. The immediate electron acceptor for the enzyme in this species is believed to be plastoquinone. Couples the redox reaction to proton translocation, and thus conserves the redox energy in a proton gradient. Cyanobacterial NDH-1 also plays a role in inorganic carbon-concentration. The polypeptide is NAD(P)H-quinone oxidoreductase subunit 3 (Crocosphaera subtropica (strain ATCC 51142 / BH68) (Cyanothece sp. (strain ATCC 51142))).